The primary structure comprises 968 residues: MPFTLGQRWISDTESELGLGTVVAVDARTVTLLFPSTGENRLYARSDSPVTRVMFNPGDTITSHDGWQMQVEEVKEENGLLTYIGTRRDTEESGVALREVFLDSKLVFSKPQDRLFAGQIDRMDRFALRYRARKYSSEQFRMPYSGLRGQRTSLIPHQLNIAHDVGRRHAPRVLLADEVGLGKTIEAGMILHQQLLSGAAERVLIIVPETLQHQWLVEMLRRFNLRFALFDDERYAEAQHDAYNPFDTEQLVICSPDFVRRSKQRLEHLCEAEWDLLVVDEAHHLVWSEDAPSREYQAIEQLAEHVPGVLLLTATPEQLGMESHFARLRLLDPNRFHDFAQFVEEQKNYRPVADAVAMLLAGNKLSNDELNMLGEMIGEQDIEPLLQAANSDSEDAQSARQELVSMLMDRHGTSRVLFRNTRNGVKGFPKRELHTIKLPLPTQYQTAIKVSGIMGARKSAEDRARDMLYPERIYQEFEGDNATWWNFDPRVEWLMGYLTSHRSQKVLVICAKAATALQLEQVLREREGIRAAVFHEGMSIIERDRAAAWFAEEDTGAQVLLCSEIGSEGRNFQFASHMVMFDLPFNPDLLEQRIGRLDRIGQAHDIQIHVPYLEKTAQSVLVRWYHEGLDAFEHTCPTGRTIYDSVYNDLINYLASPDQTEGFDDLIKNCREQHEALKAQLEQGRDRLLEIHSNGGEKAQALAESIEEQDDDTNLIAFAMNLFDIIGINQDDRGDNMIVLTPSDHMLVPDFPGLSEDGITITFDREVALAREDAQFITWEHPLIRNGLDLILSGDTGSSTISLLKNKALPVGTLLVELIYVVEAQAPKQLQLNRFLPPTPVRMLLDKNGNNLAALVEFETFNRQLNAVNRHTGSKLVNAVQQDVHAILQLGEAQIEKSARALIDAARNEADEKLSAELSRLEALRAVNPNIRDDELTAIESNRQQVMESLDQAGWRLDALRLIVVTHQ.

The region spanning 164-334 (DVGRRHAPRV…FARLRLLDPN (171 aa)) is the Helicase ATP-binding domain. 177–184 (DEVGLGKT) serves as a coordination point for ATP. The DEAH box motif lies at 280-283 (DEAH). The region spanning 490 to 662 (RVEWLMGYLT…YLASPDQTEG (173 aa)) is the Helicase C-terminal domain.

The protein belongs to the SNF2/RAD54 helicase family. RapA subfamily. Interacts with the RNAP. Has a higher affinity for the core RNAP than for the holoenzyme. Its ATPase activity is stimulated by binding to RNAP.

Its function is as follows. Transcription regulator that activates transcription by stimulating RNA polymerase (RNAP) recycling in case of stress conditions such as supercoiled DNA or high salt concentrations. Probably acts by releasing the RNAP, when it is trapped or immobilized on tightly supercoiled DNA. Does not activate transcription on linear DNA. Probably not involved in DNA repair. The polypeptide is RNA polymerase-associated protein RapA (Shigella dysenteriae serotype 1 (strain Sd197)).